The sequence spans 618 residues: Baculoviral IAP repeat-containing protein 2 (618 aa).

BIR repeat units follow at residues E46–I113, E184–L250, and H269–L336. Residues C306, C309, H326, and C333 each contribute to the Zn(2+) site. The 91-residue stretch at M453–K543 folds into the CARD domain. An RING-type zinc finger spans residues C571–R606.

Belongs to the IAP family. Interacts with DIABLO/SMAC and with PRSS25; these interactions inhibit apoptotic suppressor activity. Interacts with CASP9. Interacts (via BIR domains) with TRAF2; the interaction is required for IKBKE ubiquitination. Interacts with E2F1, RIPK1, RIPK2, RIPK3, RIPK4, BIRC5/survivin and USP19. HSP90AB1. Interacts with UBXN1. Interacts with GSK3B. Interacts with several death receptors, inclusing FAS, TNFRSF10A and TNFRSF10B. Recruited to TNFRSF10B in the absence of receptor stimulation. When TNFRSF10B is stimulated, further recruited to the receptor and cleaved by caspases. Proteolytic fragments remain associated with TNFRSF10B. In terms of processing, auto-ubiquitinated and degraded by the proteasome in apoptotic cells. Post-translationally, upon stimulation of death receptors, including TNFRSF10B, recruited to receptors and cleaved by caspases. Proteolytic fragments remain associated with the receptors. This cleavage presumably inactivates the protein. In terms of tissue distribution, present in many fetal and adult tissues. Mainly expressed in adult skeletal muscle, thymus, testis, ovary, and pancreas, low or absent in brain and peripheral blood leukocytes.

It localises to the cytoplasm. The protein localises to the nucleus. It carries out the reaction S-ubiquitinyl-[E2 ubiquitin-conjugating enzyme]-L-cysteine + [acceptor protein]-L-lysine = [E2 ubiquitin-conjugating enzyme]-L-cysteine + N(6)-ubiquitinyl-[acceptor protein]-L-lysine.. The CARD domain inhibits the activation of E3 ubiquitin ligase activity by preventing RING domain dimerization and E2 ubiquitin donor binding and activation. The CARD domain-mediated autoinhibition of the E3 ubiquitin-protein ligase activity suppresses cell proliferation and migration. USP19 regulates the stability of BIRC2/c-IAP1 by preventing its ubiquitination. Multi-functional protein which regulates not only caspases and apoptosis, but also modulates inflammatory signaling and immunity, mitogenic kinase signaling, and cell proliferation, as well as cell invasion and metastasis. Acts as an E3 ubiquitin-protein ligase regulating NF-kappa-B signaling and regulates both canonical and non-canonical NF-kappa-B signaling by acting in opposite directions: acts as a positive regulator of the canonical pathway and suppresses constitutive activation of non-canonical NF-kappa-B signaling. The target proteins for its E3 ubiquitin-protein ligase activity include: RIPK1, RIPK2, RIPK3, RIPK4, CASP3, CASP7, CASP8, TRAF2, DIABLO/SMAC, MAP3K14/NIK, MAP3K5/ASK1, IKBKG/NEMO, IKBKE and MXD1/MAD1. Can also function as an E3 ubiquitin-protein ligase of the NEDD8 conjugation pathway, targeting effector caspases for neddylation and inactivation. Acts as an important regulator of innate immune signaling via regulation of Toll-like receptors (TLRs), Nodlike receptors (NLRs) and RIG-I like receptors (RLRs), collectively referred to as pattern recognition receptors (PRRs). Protects cells from spontaneous formation of the ripoptosome, a large multi-protein complex that has the capability to kill cancer cells in a caspase-dependent and caspase-independent manner. Suppresses ripoptosome formation by ubiquitinating RIPK1 and CASP8. Can stimulate the transcriptional activity of E2F1. Plays a role in the modulation of the cell cycle. The protein is Baculoviral IAP repeat-containing protein 2 (BIRC2) of Homo sapiens (Human).